The chain runs to 186 residues: Der GTPase-activating protein YihI (186 aa).

The segment at 39 to 77 (LDAKAREDKKKRKHKGLASGSRHSAVEEKANKLQNEIKD) is disordered. The segment covering 62–77 (SAVEEKANKLQNEIKD) has biased composition (basic and acidic residues).

The protein belongs to the YihI family. Interacts with Der.

In terms of biological role, a GTPase-activating protein (GAP) that modifies Der/EngA GTPase function. May play a role in ribosome biogenesis. This chain is Der GTPase-activating protein YihI, found in Haemophilus influenzae (strain 86-028NP).